A 257-amino-acid polypeptide reads, in one-letter code: Large ribosomal subunit protein uL2 (257 aa).

Positions valine 207–arginine 226 are disordered.

Belongs to the universal ribosomal protein uL2 family. Component of the large ribosomal subunit.

Its subcellular location is the cytoplasm. Functionally, component of the large ribosomal subunit. The ribosome is a large ribonucleoprotein complex responsible for the synthesis of proteins in the cell. In Ictalurus punctatus (Channel catfish), this protein is Large ribosomal subunit protein uL2 (rpl8).